The following is a 151-amino-acid chain: Probable flavodoxin 2 (151 aa).

The Flavodoxin-like domain maps to 4-144 (ILLVYATMSG…ELINFGRQFA (141 aa)). FMN-binding positions include 10–14 (TMSGN) and 88–119 (VFGS…DIVL).

It belongs to the flavodoxin family. FMN serves as cofactor.

Its function is as follows. Low-potential electron donor to a number of redox enzymes. The protein is Probable flavodoxin 2 (ykuP) of Bacillus subtilis (strain 168).